A 322-amino-acid chain; its full sequence is 4-hydroxythreonine-4-phosphate dehydrogenase (322 aa).

T132 is a substrate binding site. H160, H205, and H260 together coordinate a divalent metal cation. Residues K268, N277, and R286 each coordinate substrate.

This sequence belongs to the PdxA family. Homodimer. Zn(2+) serves as cofactor. Mg(2+) is required as a cofactor. It depends on Co(2+) as a cofactor.

It is found in the cytoplasm. The enzyme catalyses 4-(phosphooxy)-L-threonine + NAD(+) = 3-amino-2-oxopropyl phosphate + CO2 + NADH. Its pathway is cofactor biosynthesis; pyridoxine 5'-phosphate biosynthesis; pyridoxine 5'-phosphate from D-erythrose 4-phosphate: step 4/5. Functionally, catalyzes the NAD(P)-dependent oxidation of 4-(phosphooxy)-L-threonine (HTP) into 2-amino-3-oxo-4-(phosphooxy)butyric acid which spontaneously decarboxylates to form 3-amino-2-oxopropyl phosphate (AHAP). This Xanthomonas oryzae pv. oryzae (strain PXO99A) protein is 4-hydroxythreonine-4-phosphate dehydrogenase.